A 551-amino-acid chain; its full sequence is MVSKITLLCFAITCDVLISMGTVQGVFNHSVGPLAVCSPDMEDARAYTENCYRRCSRNKEPSTHGYVWLYSDTAPKGGPVVTRCNKVRVKQVFTETWSFSFIKGTPTRMTLDVTEAECVAVMRSQCPTHNCNIKAPSELPEEYHYASDTEVVQDYLEILSMPSGLDYMEENLRITPSQSKFSFQLTDGKGQEGQYIYFWDTKYDDTKCPFDSFQSHGCDKYDSPLDLINCRESRFVIPSIANSTTLVGACQGLQKSTTGLIYKWDDRPDSIANDSKRIALTKNDQTAGNVATLRVLVADSLNAVDEDLCHTQCEMLDFILRSDRKREVLTRIGGSYLVVSKTSYIRQCRPLVGCRIVKPHYFCGNPNRVAIICHGKVWYWDPLKSYVDEGMNCERRVAGTKLVFAVGNHEYAIDDDMHVELPEHETYGISHDLLASSEDRISKDIVDPTELRNSWQSHIAKEGRMSIEPLSQDKQVSHWDAEFSNPLTWLTSAGGWILDMSHKVTLWATVFLTLGALVAGAKVWEIMRKANRKSQYKRTNTEPHDSQATWI.

An N-terminal signal peptide occupies residues 1 to 25; it reads MVSKITLLCFAITCDVLISMGTVQG. Over 26–503 the chain is Virion surface; the sequence is VFNHSVGPLA…GGWILDMSHK (478 aa). A helical transmembrane segment spans residues 504–524; sequence VTLWATVFLTLGALVAGAKVW. Residues 525–551 lie on the Intravirion side of the membrane; the sequence is EIMRKANRKSQYKRTNTEPHDSQATWI.

It belongs to the cytorhabdovirus glycoprotein family. As to quaternary structure, homotrimer. Interacts with matrix protein. Post-translationally, glycosylated by host. Glycosylation is crucial for glycoprotein export at the cell surface.

The protein resides in the virion membrane. In terms of biological role, attaches the virus to host cellular receptor, inducing endocytosis of the virion. In the endosome, the acidic pH induces conformational changes in the glycoprotein trimer, which trigger fusion between virus and cell membrane. The sequence is that of Glycoprotein (G) from Embergeria (Garden lettuce).